We begin with the raw amino-acid sequence, 119 residues long: Putative arsenical resistance operon repressor ArsR2 (119 aa).

Positions 24 to 119 constitute an HTH arsR-type domain; it reads VDSDAMATDL…TLDDLRGNHE (96 aa). Residues 60-83 constitute a DNA-binding region (H-T-H motif); it reads VCDLEATVGVSQSAVSQALSRLYT.

Transcriptional repressor for the arsR2M operon. This chain is Putative arsenical resistance operon repressor ArsR2 (arsR2), found in Halobacterium salinarum (strain ATCC 700922 / JCM 11081 / NRC-1) (Halobacterium halobium).